The primary structure comprises 490 residues: uncharacterized protein (490 aa).

A helical transmembrane segment spans residues 27–47 (VYVFLTTIILLLSLISTLIII).

Its subcellular location is the membrane. This is an uncharacterized protein from Borreliella burgdorferi (strain ATCC 35210 / DSM 4680 / CIP 102532 / B31) (Borrelia burgdorferi).